Here is a 351-residue protein sequence, read N- to C-terminus: MSITIKLGQLAEFLGATLRGDKDIEITGLATLQEAGPGQVSFLANPKYRKLLVDTQATAVLLKPADADGYAGNALVVPDTYLAYARISHFFDPKPKSSAGVHPTAVIAADALIDPAASIGAFAVIESGVRIAAGVTIGAHCFIGARCEIGEGGWLAPRVTLYHDVRIGKRVVIQSGAVLGGEGFGFAQDKGIYHKVAQIGGVTLGDDVEVGVNTAIDRGALADTRIGNGVKLDNQIQIAHNVQIGDHTAMAACVGISGSTKIGKHCMLAGGVGLVGHIEICDGVFITGMTMVTHSITEPGSYSSGTAMQPAAEWRKSAARLRKIDDMARRLQKLEKAIETVTCADNRSSDG.

The active-site Proton acceptor is histidine 240.

It belongs to the transferase hexapeptide repeat family. LpxD subfamily. In terms of assembly, homotrimer.

The enzyme catalyses a UDP-3-O-[(3R)-3-hydroxyacyl]-alpha-D-glucosamine + a (3R)-hydroxyacyl-[ACP] = a UDP-2-N,3-O-bis[(3R)-3-hydroxyacyl]-alpha-D-glucosamine + holo-[ACP] + H(+). It functions in the pathway bacterial outer membrane biogenesis; LPS lipid A biosynthesis. Its function is as follows. Catalyzes the N-acylation of UDP-3-O-acylglucosamine using 3-hydroxyacyl-ACP as the acyl donor. Is involved in the biosynthesis of lipid A, a phosphorylated glycolipid that anchors the lipopolysaccharide to the outer membrane of the cell. The protein is UDP-3-O-acylglucosamine N-acyltransferase of Pseudomonas syringae pv. syringae (strain B728a).